Consider the following 95-residue polypeptide: Small ribosomal subunit protein bS6 (95 aa).

Belongs to the bacterial ribosomal protein bS6 family.

In terms of biological role, binds together with bS18 to 16S ribosomal RNA. This is Small ribosomal subunit protein bS6 from Geobacillus kaustophilus (strain HTA426).